We begin with the raw amino-acid sequence, 146 residues long: Hemoglobin subunit beta (146 aa).

Val1 carries the N-acetylvaline modification. The 145-residue stretch at 2-146 (HLTGEEKSAV…VANALAHKYH (145 aa)) folds into the Globin domain. Thr12 carries the post-translational modification Phosphothreonine. Phosphoserine is present on Ser44. Lys59 is subject to N6-acetyllysine. His63 lines the heme b pocket. Lys82 bears the N6-acetyllysine mark. His92 provides a ligand contact to heme b. The residue at position 93 (Cys93) is an S-nitrosocysteine. Lys144 is modified (N6-acetyllysine).

It belongs to the globin family. Heterotetramer of two alpha chains and two beta chains. In terms of tissue distribution, red blood cells.

Its function is as follows. Involved in oxygen transport from the lung to the various peripheral tissues. This chain is Hemoglobin subunit beta (HBB), found in Saguinus mystax (Moustached tamarin).